We begin with the raw amino-acid sequence, 429 residues long: Glutamate-1-semialdehyde 2,1-aminomutase (429 aa).

K267 is subject to N6-(pyridoxal phosphate)lysine.

The protein belongs to the class-III pyridoxal-phosphate-dependent aminotransferase family. HemL subfamily. As to quaternary structure, homodimer. It depends on pyridoxal 5'-phosphate as a cofactor.

It is found in the cytoplasm. The catalysed reaction is (S)-4-amino-5-oxopentanoate = 5-aminolevulinate. It participates in porphyrin-containing compound metabolism; protoporphyrin-IX biosynthesis; 5-aminolevulinate from L-glutamyl-tRNA(Glu): step 2/2. This chain is Glutamate-1-semialdehyde 2,1-aminomutase, found in Xanthomonas oryzae pv. oryzae (strain MAFF 311018).